A 327-amino-acid chain; its full sequence is Malate dehydrogenase (327 aa).

NAD(+) is bound at residue 12–18; that stretch reads GAAGQIG. Residues R93 and R99 each coordinate substrate. NAD(+)-binding positions include N106, Q113, and 130 to 132; that span reads VGN. Residues N132 and R163 each coordinate substrate. H188 functions as the Proton acceptor in the catalytic mechanism.

Belongs to the LDH/MDH superfamily. MDH type 2 family.

The enzyme catalyses (S)-malate + NAD(+) = oxaloacetate + NADH + H(+). Its function is as follows. Catalyzes the reversible oxidation of malate to oxaloacetate. This Paraburkholderia phymatum (strain DSM 17167 / CIP 108236 / LMG 21445 / STM815) (Burkholderia phymatum) protein is Malate dehydrogenase.